Here is a 389-residue protein sequence, read N- to C-terminus: Sinapine esterase (389 aa).

A signal peptide spans 1-25 (MASSLKKLITSFLLFFFYTIIVASS). The Nucleophile role is filled by Ser41. N-linked (GlcNAc...) asparagine glycosylation is found at Asn104, Asn137, and Asn320. Catalysis depends on residues Asp345 and His348. N-linked (GlcNAc...) asparagine glycans are attached at residues Asn372 and Asn383.

The protein belongs to the 'GDSL' lipolytic enzyme family. As to expression, expressed in most tissues or organs of the mature seedlings. Not expressed in roots of mature seedlings.

It is found in the secreted. It carries out the reaction O-sinapoylcholine + H2O = (E)-sinapate + choline + H(+). Its activity is regulated as follows. Inhibited by PMSF. In terms of biological role, sinapine esterase that catalyzes that hydrolysis of sinapine, releasing choline and sinapate. Sinapine (O-sinapoylcholine) is the predominant phenolic compound in a complex group of sinapate esters in seeds of oilseed rape (B.napus). Sinapine has antinutritive activity and prevents the use of seed protein for food and feed. Shows broad substrate specificity towards various other choline esters, including phosphatidylcholine. In Brassica napus (Rape), this protein is Sinapine esterase.